We begin with the raw amino-acid sequence, 315 residues long: Small ribosomal subunit protein uS2 (315 aa).

Residues Ala241–Arg315 are disordered. Basic and acidic residues predominate over residues His243–Ala288.

This sequence belongs to the universal ribosomal protein uS2 family.

The protein is Small ribosomal subunit protein uS2 of Anaeromyxobacter sp. (strain Fw109-5).